Reading from the N-terminus, the 700-residue chain is Elongation factor G (700 aa).

Residues 10–286 (TKVRNIGIMA…AVVDYLPSPL (277 aa)) form the tr-type G domain. Residues 19-26 (AHIDAGKT), 83-87 (DTPGH), and 137-140 (NKMD) each bind GTP.

Belongs to the TRAFAC class translation factor GTPase superfamily. Classic translation factor GTPase family. EF-G/EF-2 subfamily.

The protein localises to the cytoplasm. Its function is as follows. Catalyzes the GTP-dependent ribosomal translocation step during translation elongation. During this step, the ribosome changes from the pre-translocational (PRE) to the post-translocational (POST) state as the newly formed A-site-bound peptidyl-tRNA and P-site-bound deacylated tRNA move to the P and E sites, respectively. Catalyzes the coordinated movement of the two tRNA molecules, the mRNA and conformational changes in the ribosome. This is Elongation factor G from Saccharopolyspora erythraea (strain ATCC 11635 / DSM 40517 / JCM 4748 / NBRC 13426 / NCIMB 8594 / NRRL 2338).